A 427-amino-acid chain; its full sequence is MSWFDTTLSRLKGLFSRPVTRSTTGLDVPLDAHGRPQDVVTETVSTSGPLKPGHLRQVRRDARLLPKGVRRYTPGRKKWMEAAEARRLFSATLRTRNRNLRDLLPDEAQLARYGLPVWRTEEDVAAALGVSVGVLRHYSIHRPRERVRHYVTFAVPKRSGGVRLLHAPKRRLKALQRRMLALLVSKLPVSPQAHGFVPGRSIKTGAAPHVGRRVVLKLDLKDFFPSVTFARVRGLLIALGYGYPVAATLAVLMTESERQPVELEGILFHVPVGPRVCVQGAPTSPALCNAVLLRLDRRLAGLARRYGYTYTRYADDLTFSGDDVTALERVRALAARYVQEEGFEVNREKTRVQRRGGAQRVTGVTVNTTLGLSREERPRLRAMLHQEARSEDVEAHRAHLDGLLAYVKMLNPEQAERLARRRKPRGT.

In terms of domain architecture, Reverse transcriptase spans 136–366 (RHYSIHRPRE…GAQRVTGVTV (231 aa)). Residues aspartate 219, aspartate 315, and aspartate 316 each coordinate Mg(2+).

This sequence belongs to the bacterial reverse transcriptase family.

The enzyme catalyses DNA(n) + a 2'-deoxyribonucleoside 5'-triphosphate = DNA(n+1) + diphosphate. Reverse transcriptase (RT) responsible for synthesis of msDNA-Mx65 (a branched molecule with RNA linked by a 2',5'-phosphodiester bond to ssDNA). The retron transcript serves as primer (from a conserved internal G residue) and template for the reaction, and codes for the RT. The retron is involved in antiviral defense. In Myxococcus xanthus, this protein is Retron Mx65 reverse transcriptase.